The sequence spans 150 residues: MMIGEQLLKKLFPDFEELVQPAGIDLRVDKVYRQMGPGSLIDDEKNLPPLEMLEPPIYRLEPGKAYLASVDRMIEIPEGYAMLYLPRSTLLRSFVSVQTAVGDPGFRGTLQFLLHNHGEYEYTLKRGERIVQAVVFPVEGSGKYSGSYQE.

This sequence belongs to the dCTP deaminase family. Archaeal dUTPase subfamily.

The enzyme catalyses dUTP + H2O = dUMP + diphosphate + H(+). It functions in the pathway pyrimidine metabolism; dUMP biosynthesis; dUMP from dCTP (dUTP route): step 2/2. This enzyme is involved in nucleotide metabolism: it produces dUMP, the immediate precursor of thymidine nucleotides and it decreases the intracellular concentration of dUTP so that uracil cannot be incorporated into DNA. In Methanothermobacter thermautotrophicus (strain ATCC 29096 / DSM 1053 / JCM 10044 / NBRC 100330 / Delta H) (Methanobacterium thermoautotrophicum), this protein is Probable deoxyuridine 5'-triphosphate nucleotidohydrolase.